The chain runs to 322 residues: Large ribosomal subunit protein uL15m (322 aa).

The transit peptide at 1-57 (MKAERQTGLRNSFTTVIGRKLINTFVPSMMLTSVAGNDIFFRGLFKSPVLAFQSYRY) directs the protein to the mitochondrion. Residues 69–99 (GSTKSFKRLGRGPSSGLGKTSGRGQKGQKAR) are disordered. Gly residues predominate over residues 81–93 (PSSGLGKTSGRGQ).

Belongs to the universal ribosomal protein uL15 family. In terms of assembly, component of the mitochondrial large ribosomal subunit (mt-LSU). Mature yeast 74S mitochondrial ribosomes consist of a small (37S) and a large (54S) subunit. The 37S small subunit contains a 15S ribosomal RNA (15S mt-rRNA) and 34 different proteins. The 54S large subunit contains a 21S rRNA (21S mt-rRNA) and 46 different proteins.

It localises to the mitochondrion. Functionally, component of the mitochondrial ribosome (mitoribosome), a dedicated translation machinery responsible for the synthesis of mitochondrial genome-encoded proteins, including at least some of the essential transmembrane subunits of the mitochondrial respiratory chain. The mitoribosomes are attached to the mitochondrial inner membrane and translation products are cotranslationally integrated into the membrane. The chain is Large ribosomal subunit protein uL15m (MRPL10) from Saccharomyces cerevisiae (strain ATCC 204508 / S288c) (Baker's yeast).